Reading from the N-terminus, the 374-residue chain is Protein Brevis radix-like 2 (374 aa).

Disordered regions lie at residues 12–43 and 57–80; these read NTNN…IKSL and AYKS…ADSD. Residues 65 to 80 are compositionally biased toward polar residues; the sequence is SGSSNQNKNRSYADSD. One can recognise a BRX 1 domain in the interval 143-198; that stretch reads KEWVAQVEPGVLITFVSLPEGGNDMKRIRFSREMFDKWQAQKWWAENFDKVMELYN. The segment at 205–316 is disordered; it reads QSVPLPTPPR…EELSVSNASD (112 aa). 2 stretches are compositionally biased toward polar residues: residues 246–259 and 267–288; these read SSGS…TQTQ and GLAT…SSVD. The segment covering 289–307 has biased composition (basic and acidic residues); it reads ESARSSFSREEEEADHSGE. The BRX 2 domain occupies 319 to 374; the sequence is TEWVEQDEAGVYITIRALPDGTRELRRVRFSREKFGETNARLWWEQNRARIQQQYL.

It belongs to the BRX family. Expressed in roots.

Its subcellular location is the nucleus. The protein is Protein Brevis radix-like 2 (BRXL2) of Arabidopsis thaliana (Mouse-ear cress).